Here is an 85-residue protein sequence, read N- to C-terminus: Cell division topological specificity factor (85 aa).

Belongs to the MinE family.

In terms of biological role, prevents the cell division inhibition by proteins MinC and MinD at internal division sites while permitting inhibition at polar sites. This ensures cell division at the proper site by restricting the formation of a division septum at the midpoint of the long axis of the cell. The protein is Cell division topological specificity factor of Shewanella amazonensis (strain ATCC BAA-1098 / SB2B).